Consider the following 400-residue polypeptide: MGERKGVNKYYPPDFNPEKHGSLNRYHNSHPLRERARKLSQGILIIRFEMPYNIWCDGCKNHIGMGVRYNAEKKKVGNYYTTPIYRFRMKCHLCVNYIEMQTDPANCDYVIVSGAQRKEERWDMEDNEQVLTTEHEKKQKLEMDAMFRLEHGEADRSTLKKALPTLSHIQEAQSAWKDDFALNSMLRKRFREKKKAMQEEEERDQALQAKASLAIPLVPETEDDRRLAALLKFHTLDSYEDKQKLKRTEIISRSWFPSTPGASASSSSSSKTNSVLKKLAQNRRATPTSSPVTMGHLGIVRRRSREVPESPQHVAETFKSGEPQLPEGTNQNRPVSPQDCSLETAETPKNSSALGQEESCQDRPQPPPDTSPEAPNPQDTPQPCSLGSSLVADYSGSESE.

Positions 1–26 (MGERKGVNKYYPPDFNPEKHGSLNRY) are disordered. Position 40 is a phosphoserine (Ser40). Positions 182-214 (LNSMLRKRFREKKKAMQEEEERDQALQAKASLA) form a coiled coil. Positions 255-400 (WFPSTPGASA…VADYSGSESE (146 aa)) are disordered. A compositionally biased stretch (polar residues) spans 283–292 (RRATPTSSPV). Residue Ser310 is modified to Phosphoserine. A compositionally biased stretch (polar residues) spans 327–341 (EGTNQNRPVSPQDCS). Residues 364–380 (PQPPPDTSPEAPNPQDT) show a composition bias toward pro residues.

The protein belongs to the CWC16 family.

The protein localises to the nucleus. In terms of biological role, may be involved in mRNA splicing. The chain is Probable splicing factor YJU2B (YJU2B) from Bos taurus (Bovine).